A 142-amino-acid chain; its full sequence is Transcriptional regulator MraZ (142 aa).

2 consecutive SpoVT-AbrB domains span residues 5-51 (ASAL…PRPE) and 77-120 (AADV…DAAT).

This sequence belongs to the MraZ family. As to quaternary structure, forms oligomers.

The protein localises to the cytoplasm. It is found in the nucleoid. The polypeptide is Transcriptional regulator MraZ (Cupriavidus taiwanensis (strain DSM 17343 / BCRC 17206 / CCUG 44338 / CIP 107171 / LMG 19424 / R1) (Ralstonia taiwanensis (strain LMG 19424))).